Here is a 255-residue protein sequence, read N- to C-terminus: MSLDLSTSLSPARPLESADAMEERLREIGAARYHDRHPFHHMLHGGELTKGQVQAWALNRYYYQCTIPVKDAVVISRFRDRATRIEWRHRLEDHDGAEGAEGGIDRWLILTDGLGLDRAYVESTDGILPATRFAVEAYVHFVRDRSPLEAIASCLTELFAPNIHATRISGMLSHYDFINPTVMAYFQRRLTQAPRDADYALRYVRDHARTPEERAAVCNALIFKTQVLWTQLDALHHAYVLGHVPPGAFVPEEMR.

Belongs to the PqqC family.

It carries out the reaction 6-(2-amino-2-carboxyethyl)-7,8-dioxo-1,2,3,4,7,8-hexahydroquinoline-2,4-dicarboxylate + 3 O2 = pyrroloquinoline quinone + 2 H2O2 + 2 H2O + H(+). It participates in cofactor biosynthesis; pyrroloquinoline quinone biosynthesis. Ring cyclization and eight-electron oxidation of 3a-(2-amino-2-carboxyethyl)-4,5-dioxo-4,5,6,7,8,9-hexahydroquinoline-7,9-dicarboxylic-acid to PQQ. The sequence is that of Pyrroloquinoline-quinone synthase from Cereibacter sphaeroides (strain ATCC 17029 / ATH 2.4.9) (Rhodobacter sphaeroides).